A 393-amino-acid polypeptide reads, in one-letter code: Nuclear hormone receptor family member nhr-90 (393 aa).

The segment at residues 6 to 79 is a DNA-binding region (nuclear receptor); sequence LQTCKICGAE…AGMKIEYFQH (74 aa). The NR C4-type zinc-finger motif lies at 9 to 30; sequence CKICGAENTRGNHFGVQCCRAC. The NR C4-type; degenerate zinc-finger motif lies at 47 to 62; that stretch reads CLSVHCGEAARFCKPC. One can recognise an NR LBD domain in the interval 121-388; sequence DLNSLVGKAS…FSHPEMFIDT (268 aa).

The protein belongs to the nuclear hormone receptor family.

The protein resides in the nucleus. Functionally, orphan nuclear receptor. The protein is Nuclear hormone receptor family member nhr-90 (nhr-90) of Caenorhabditis elegans.